A 35-amino-acid polypeptide reads, in one-letter code: Ranatuerin-2SPa (35 aa).

A disulfide bridge connects residues Cys-28 and Cys-33.

As to expression, expressed by the skin glands.

It is found in the secreted. In terms of biological role, antibacterial activity against Gram-positive bacterium S.aureus. Shows no detectable hemolytic activity towards human erythrocytes. This is Ranatuerin-2SPa from Lithobates septentrionalis (Mink frog).